The following is a 188-amino-acid chain: NADH-quinone oxidoreductase subunit B 1 (188 aa).

Cys-32, Cys-33, Cys-98, and Cys-128 together coordinate [4Fe-4S] cluster. The disordered stretch occupies residues 153–188 (VGGVSRPDALASPADALPPRAADSLTAPPVRPPDPS). Over residues 157 to 177 (SRPDALASPADALPPRAADSL) the composition is skewed to low complexity.

This sequence belongs to the complex I 20 kDa subunit family. As to quaternary structure, NDH-1 is composed of 14 different subunits. Subunits NuoB, C, D, E, F, and G constitute the peripheral sector of the complex. Requires [4Fe-4S] cluster as cofactor.

It is found in the cell membrane. It catalyses the reaction a quinone + NADH + 5 H(+)(in) = a quinol + NAD(+) + 4 H(+)(out). In terms of biological role, NDH-1 shuttles electrons from NADH, via FMN and iron-sulfur (Fe-S) centers, to quinones in the respiratory chain. The immediate electron acceptor for the enzyme in this species is believed to be a menaquinone. Couples the redox reaction to proton translocation (for every two electrons transferred, four hydrogen ions are translocated across the cytoplasmic membrane), and thus conserves the redox energy in a proton gradient. The sequence is that of NADH-quinone oxidoreductase subunit B 1 (nuoB1) from Salinispora tropica (strain ATCC BAA-916 / DSM 44818 / JCM 13857 / NBRC 105044 / CNB-440).